We begin with the raw amino-acid sequence, 301 residues long: Protein FdhE homolog (301 aa).

This sequence belongs to the FdhE family.

The protein resides in the cytoplasm. In terms of biological role, necessary for formate dehydrogenase activity. This Shewanella baltica (strain OS185) protein is Protein FdhE homolog.